The primary structure comprises 259 residues: MALLELERISAQYPGASTPVLADINLSLGPRQLLVALGPSGSGKTSLLNLIAGFVAPSGGRITLDGAPVQGPGAERGVVFQDDALLPWQDVLANVAFGLELAGVPRAQREAKAREMLALVDLAGFAERRIWQLSGGQKQRVGLARALAADPRVLLMDEPFGALDAFTREQMQELLLQVWQRTAKPVFLITHDIEEAVFLATELVLLAPNPGRVVERLQLDFGQRYAAGESARAIKSDPRFIETREHVLARVFSQRQESA.

Positions 4–233 constitute an ABC transporter domain; that stretch reads LELERISAQY…RYAAGESARA (230 aa). ATP is bound at residue 38–45; that stretch reads GPSGSGKT.

The protein belongs to the ABC transporter superfamily. Taurine importer (TC 3.A.1.17.1) family. The complex is composed of two ATP-binding proteins (TauB), two transmembrane proteins (TauC) and a solute-binding protein (TauA).

The protein resides in the cell inner membrane. The enzyme catalyses taurine(out) + ATP + H2O = taurine(in) + ADP + phosphate + H(+). Functionally, part of the ABC transporter complex TauABC involved in taurine import. Responsible for energy coupling to the transport system. The sequence is that of Taurine import ATP-binding protein TauB from Pseudomonas entomophila (strain L48).